The primary structure comprises 271 residues: 1,4-dihydroxy-2-naphthoyl-CoA synthase (271 aa).

Substrate contacts are provided by residues 71-75 (SGGDQ), tyrosine 83, 115-119 (YAIGG), threonine 141, serine 147, tyrosine 244, and lysine 259. 140 to 142 (QTG) contacts hydrogencarbonate. Residues 250–263 (KEGRDSFKEKRKPD) are compositionally biased toward basic and acidic residues. The tract at residues 250-271 (KEGRDSFKEKRKPDFGQFPRFP) is disordered.

This sequence belongs to the enoyl-CoA hydratase/isomerase family. MenB subfamily. It depends on hydrogencarbonate as a cofactor.

The enzyme catalyses 2-succinylbenzoyl-CoA + H(+) = 1,4-dihydroxy-2-naphthoyl-CoA + H2O. It functions in the pathway quinol/quinone metabolism; 1,4-dihydroxy-2-naphthoate biosynthesis; 1,4-dihydroxy-2-naphthoate from chorismate: step 6/7. It participates in quinol/quinone metabolism; menaquinone biosynthesis. Converts o-succinylbenzoyl-CoA (OSB-CoA) to 1,4-dihydroxy-2-naphthoyl-CoA (DHNA-CoA). This Bacillus subtilis (strain 168) protein is 1,4-dihydroxy-2-naphthoyl-CoA synthase.